The following is a 230-amino-acid chain: Ribosomal RNA large subunit methyltransferase E (230 aa).

S-adenosyl-L-methionine is bound by residues Gly82, Trp84, Asp100, Asp116, and Asp140. Lys180 serves as the catalytic Proton acceptor.

It belongs to the class I-like SAM-binding methyltransferase superfamily. RNA methyltransferase RlmE family.

It localises to the cytoplasm. The catalysed reaction is uridine(2552) in 23S rRNA + S-adenosyl-L-methionine = 2'-O-methyluridine(2552) in 23S rRNA + S-adenosyl-L-homocysteine + H(+). Its function is as follows. Specifically methylates the uridine in position 2552 of 23S rRNA at the 2'-O position of the ribose in the fully assembled 50S ribosomal subunit. This is Ribosomal RNA large subunit methyltransferase E from Granulibacter bethesdensis (strain ATCC BAA-1260 / CGDNIH1).